The following is a 555-amino-acid chain: E3 ubiquitin-protein ligase NEURL1B (555 aa).

An NHR 1 domain is found at A38–S194. Position 199 is a phosphothreonine (T199). Positions D279–G433 constitute an NHR 2 domain. The tract at residues Q436 to P493 is disordered. Low complexity predominate over residues S462–S480. Pro residues predominate over residues P481–P493. The RING-type zinc-finger motif lies at C503–R543.

As to quaternary structure, interacts with JAG1, DLL1 and DLL4. In terms of tissue distribution, highest expression in brain, prostate and small intestine. In the brain the levels are higher in fetal than in adult stage. In the adult brain the highest levels are detected in the olfactory system, cerebellar cortex, optic nerve and the frontal lobe.

The protein localises to the cytoplasm. The catalysed reaction is S-ubiquitinyl-[E2 ubiquitin-conjugating enzyme]-L-cysteine + [acceptor protein]-L-lysine = [E2 ubiquitin-conjugating enzyme]-L-cysteine + N(6)-ubiquitinyl-[acceptor protein]-L-lysine.. It functions in the pathway protein modification; protein ubiquitination. In terms of biological role, E3 ubiquitin-protein ligase involved in regulation of the Notch pathway through influencing the stability and activity of several Notch ligands. The sequence is that of E3 ubiquitin-protein ligase NEURL1B (NEURL1B) from Homo sapiens (Human).